The sequence spans 217 residues: Small ribosomal subunit protein uS2 (217 aa).

It belongs to the universal ribosomal protein uS2 family.

The protein is Small ribosomal subunit protein uS2 of Korarchaeum cryptofilum (strain OPF8).